We begin with the raw amino-acid sequence, 411 residues long: Arginine deiminase 1 (411 aa).

Catalysis depends on cysteine 401, which acts as the Amidino-cysteine intermediate.

It belongs to the arginine deiminase family.

It is found in the cytoplasm. The enzyme catalyses L-arginine + H2O = L-citrulline + NH4(+). It functions in the pathway amino-acid degradation; L-arginine degradation via ADI pathway; carbamoyl phosphate from L-arginine: step 1/2. The polypeptide is Arginine deiminase 1 (arcA1) (Staphylococcus epidermidis (strain ATCC 12228 / FDA PCI 1200)).